A 239-amino-acid polypeptide reads, in one-letter code: Ribosomal RNA small subunit methyltransferase G (239 aa).

Residues Gly-95, Leu-100, 118–120 (EAT), 146–147 (AE), and Arg-164 each bind S-adenosyl-L-methionine.

Belongs to the methyltransferase superfamily. RNA methyltransferase RsmG family.

The protein resides in the cytoplasm. It catalyses the reaction guanosine(527) in 16S rRNA + S-adenosyl-L-methionine = N(7)-methylguanosine(527) in 16S rRNA + S-adenosyl-L-homocysteine. Functionally, specifically methylates the N7 position of guanine in position 527 of 16S rRNA. The protein is Ribosomal RNA small subunit methyltransferase G of Sorangium cellulosum (strain So ce56) (Polyangium cellulosum (strain So ce56)).